The primary structure comprises 266 residues: Arcelin-4 (266 aa).

A signal peptide spans 1–21 (MGSSKLLSLALLLVLLTHANS). Asn28 and Asn92 each carry an N-linked (GlcNAc...) asparagine glycan.

Belongs to the leguminous lectin family.

In terms of biological role, seed storage. This carbohydrate-binding lectin has toxic effects on the important bean bruchid pests, Z.subfasciatus and A.obtectus. This is Arcelin-4 (ARC4) from Phaseolus vulgaris (Kidney bean).